The primary structure comprises 179 residues: Large ribosomal subunit protein uL6 (179 aa).

It belongs to the universal ribosomal protein uL6 family. In terms of assembly, part of the 50S ribosomal subunit.

Functionally, this protein binds to the 23S rRNA, and is important in its secondary structure. It is located near the subunit interface in the base of the L7/L12 stalk, and near the tRNA binding site of the peptidyltransferase center. In Akkermansia muciniphila (strain ATCC BAA-835 / DSM 22959 / JCM 33894 / BCRC 81048 / CCUG 64013 / CIP 107961 / Muc), this protein is Large ribosomal subunit protein uL6.